Here is a 500-residue protein sequence, read N- to C-terminus: Cryptochrome DASH (500 aa).

The Photolyase/cryptochrome alpha/beta domain maps to 4-138 (KTVLVWYRND…PVRSFWGTTL (135 aa)).

It belongs to the DNA photolyase class-1 family. FAD is required as a cofactor. It depends on (6R)-5,10-methylene-5,6,7,8-tetrahydrofolate as a cofactor.

Its function is as follows. May have a photoreceptor function. Binds DNA; probably functions as a transcriptional repressor. The polypeptide is Cryptochrome DASH (cry) (Gloeobacter violaceus (strain ATCC 29082 / PCC 7421)).